Here is a 2664-residue protein sequence, read N- to C-terminus: Inositol 1,4,5-trisphosphate-gated calcium channel ITPR3 (2664 aa).

Topologically, residues 1 to 2227 (MSEMSSFLHI…YVEGASTGVL (2227 aa)) are cytoplasmic. MIR domains follow at residues 113 to 173 (GDVV…LRSN), 174 to 224 (GDNV…INLF), 232 to 288 (EEVL…VEVV), 295 to 372 (GGAG…LDPT), and 378 to 434 (DSFV…IVSV). Residues R266, T268, L269, and R270 each coordinate 1D-myo-inositol 1,4,5-trisphosphate. The tract at residues 320–344 (NPSYKGDASDPKAAGTGAQGRTGRR) is disordered. 1D-myo-inositol 1,4,5-trisphosphate is bound by residues R503, K507, R510, Y567, R568, and K569. A Ca(2+)-binding site is contributed by R743. Residues S909 and S927 each carry the phosphoserine modification. 2 residues coordinate Ca(2+): E1115 and E1118. Disordered stretches follow at residues 1124–1158 (KGASKGEEGEAGPAKDKKERPTDEEGFLHPPGEKS) and 1790–1850 (QQET…VGER). Residues 1792 to 1805 (ETKSTVAVNMSDLG) show a composition bias toward polar residues. 3 positions are modified to phosphoserine: S1806, S1825, and S1827. 2 residues coordinate Ca(2+): E1875 and E1939. Residues A1989, E2142, and K2145 each coordinate ATP. Residues 2228-2248 (GSPLISLLFWILICFSIAALF) traverse the membrane as a helical segment. Residues 2249–2256 (TKRYSVRP) lie on the Extracellular side of the membrane. Residues 2257–2277 (LIVALILRSIYYLGIGPTLNI) form a helical membrane-spanning segment. Residues 2278 to 2286 (LGALNLTNK) lie on the Cytoplasmic side of the membrane. Residues 2287–2304 (IVFVVSFVGNRGTFIRGY) traverse the membrane as a helical segment. Residues 2305–2318 (KAMVMDMEFLYHVG) are Extracellular-facing. A helical transmembrane segment spans residues 2319-2339 (YILTSVLGLFAHELFYSILLF). Topologically, residues 2340 to 2361 (DLIYREETLFNVIKSVTRNGRS) are cytoplasmic. The helical transmembrane segment at 2362–2382 (ILLTALLALILVYLFSIVGFL) threads the bilayer. Residues 2383–2489 (FLKDDFILEV…ESLFPARVVY (107 aa)) lie on the Extracellular side of the membrane. A disulfide bridge connects residues C2448 and C2454. A helical transmembrane segment spans residues 2490–2510 (DLLFFFIVIIIVLNLIFGVII). Topologically, residues 2511 to 2664 (DTFADLRSEK…FVDVQNCMSR (154 aa)) are cytoplasmic. ATP contacts are provided by C2531 and F2532. C2531 contacts Zn(2+). Zn(2+) is bound by residues C2534 and H2551. ATP-binding residues include K2553, H2556, N2557, and M2558. H2556 lines the Zn(2+) pocket. Position 2574 (T2574) interacts with Ca(2+). S2602 and S2663 each carry phosphoserine.

Belongs to the InsP3 receptor family. Homotetramer. Homodimer. Interacts with TRPC1, TRPC3 and TRPC4. Interacts with TRPV4. Interacts with SIGMAR1. Interacts with PML and AKT1. Interacts with IRAG2 (via coiled-coil domain). Interacts with CABP1. Interacts with TMBIM4/LFG4. Interacts with CEMIP. Interacts with TESPA1. Interacts with TMEM203. Interacts with BOK; regulates ITPR3 expression. Interacts with BCL2L10. Interacts with CHGA and CHGB. In terms of processing, phosphorylated by AKT1 on serine and/or threonine residues.

It localises to the endoplasmic reticulum membrane. It is found in the cytoplasmic vesicle. The protein resides in the secretory vesicle membrane. It catalyses the reaction Ca(2+)(in) = Ca(2+)(out). Its activity is regulated as follows. Inositol 1,4,5-trisphosphate-gated calcium channel is regulated by cytosolic calcium in a biphasic manner. At low concentrations, cytosolic calcium binds at a high-affinity juxtamembrane domain (JD) calcium binding site, allowing ITPR3 to activate by escaping a low-energy resting state through an ensemble of preactivated states. At high cytosolic calcium concentrations, ITPR3 preferentially enters an inhibited state stabilized by calcium binding at a second, low-affinity cytoplasmic domain (CD) calcium binding site. Inositol 1,4,5-trisphosphate-gated calcium channel that, upon 1D-myo-inositol 1,4,5-trisphosphate binding, transports calcium from the endoplasmic reticulum lumen to cytoplasm, thus releasing the intracellular calcium and therefore participates in cellular calcium ion homeostasis. 1D-myo-inositol 1,4,5-trisphosphate binds to the ligand-free channel without altering its global conformation, yielding the low-energy resting state, then progresses through resting-to preactivated transitions to the higher energy preactivated state, which increases affinity for calcium, promoting binding of the low basal cytosolic calcium at the juxtamembrane domain (JD) site, favoring the transition through the ensemble of high-energy intermediate states along the trajectory to the fully-open activated state. Upon opening, releases calcium in the cytosol where it can bind to the low-affinity cytoplasmic domain (CD) site and stabilizes the inhibited state to terminate calcium release. In Bos taurus (Bovine), this protein is Inositol 1,4,5-trisphosphate-gated calcium channel ITPR3.